The chain runs to 283 residues: 4-hydroxy-tetrahydrodipicolinate reductase (283 aa).

NAD(+) contacts are provided by residues 15–20 (GALGRM) and 116–118 (GTT). H172 (proton donor/acceptor) is an active-site residue. H173 lines the (S)-2,3,4,5-tetrahydrodipicolinate pocket. Residue K176 is the Proton donor of the active site. Position 182-183 (182-183 (GT)) interacts with (S)-2,3,4,5-tetrahydrodipicolinate.

The protein belongs to the DapB family.

It localises to the cytoplasm. The enzyme catalyses (S)-2,3,4,5-tetrahydrodipicolinate + NAD(+) + H2O = (2S,4S)-4-hydroxy-2,3,4,5-tetrahydrodipicolinate + NADH + H(+). The catalysed reaction is (S)-2,3,4,5-tetrahydrodipicolinate + NADP(+) + H2O = (2S,4S)-4-hydroxy-2,3,4,5-tetrahydrodipicolinate + NADPH + H(+). It functions in the pathway amino-acid biosynthesis; L-lysine biosynthesis via DAP pathway; (S)-tetrahydrodipicolinate from L-aspartate: step 4/4. Its function is as follows. Catalyzes the conversion of 4-hydroxy-tetrahydrodipicolinate (HTPA) to tetrahydrodipicolinate. This is 4-hydroxy-tetrahydrodipicolinate reductase from Prochlorococcus marinus (strain MIT 9313).